We begin with the raw amino-acid sequence, 88 residues long: Platelet factor 4 (88 aa).

Thr-7 carries an O-linked (GalNAc...) threonine glycan. Disulfide bonds link Cys-25-Cys-51 and Cys-27-Cys-67. At Ser-41 the chain carries Phosphoserine. Residue 76–82 (KKILKKL) coordinates heparin.

This sequence belongs to the intercrine alpha (chemokine CxC) family. In terms of assembly, homotetramer. Interacts with TNFAIP6 (via Link domain). Interacts with CCR1. Interacts with CXCR3. Interacts with THBD; this interaction enhances generation of activated protein C. O-linked glycan consists of Gal-GalNAc disaccharide which is modified with sialic acid residues (microheterogeneity).

The protein resides in the secreted. Its function is as follows. Chemokine released during platelet aggregation that plays a role in different biological processes including hematopoiesis, cell proliferation, differentiation, and activation. Acts via different functional receptors including CCR1, CXCR3A or CXCR3B. Upon interaction with CXCR3A receptor, induces activated T-lymphocytes migration mediated via downstream Ras/extracellular signal-regulated kinase (ERK) signaling. Neutralizes the anticoagulant effect of heparin by binding more strongly to heparin than to the chondroitin-4-sulfate chains of the carrier molecule. Plays a role in the inhibition of hematopoiesis and in the maintenance of hematopoietic stem cell (HSC) quiescence. Chemotactic for neutrophils and monocytes via CCR1. Inhibits endothelial cell proliferation. In cooperation with toll-like receptor 8/TLR8, induces chromatin remodeling and activates inflammatory gene expression via the TBK1-IRF5 axis. In addition, induces myofibroblast differentiation and collagen synthesis in different precursor cells, including endothelial cells, by stimulating endothelial-to-mesenchymal transition. Interacts with thrombomodulin/THBD to enhance the activation of protein C and thus potentiates its anticoagulant activity. The protein is Platelet factor 4 (PF4) of Bos taurus (Bovine).